A 176-amino-acid chain; its full sequence is ATP-dependent protease subunit HslV (176 aa).

T5 is an active-site residue. Na(+) contacts are provided by G161, C164, and T167.

This sequence belongs to the peptidase T1B family. HslV subfamily. A double ring-shaped homohexamer of HslV is capped on each side by a ring-shaped HslU homohexamer. The assembly of the HslU/HslV complex is dependent on binding of ATP.

It localises to the cytoplasm. The catalysed reaction is ATP-dependent cleavage of peptide bonds with broad specificity.. Its activity is regulated as follows. Allosterically activated by HslU binding. In terms of biological role, protease subunit of a proteasome-like degradation complex believed to be a general protein degrading machinery. The protein is ATP-dependent protease subunit HslV of Sulfurovum sp. (strain NBC37-1).